The following is a 155-amino-acid chain: Probable jacalin-related lectin 26 (155 aa).

The next 2 membrane-spanning stretches (helical) occupy residues 26–48 (AYLYLSFHLKLLYSVPASYIAMI) and 127–149 (VSFVSITIIYFCVCVRSGQVLFL). The Jacalin-type lectin domain occupies 47 to 155 (MIRAGSVGKK…VLFLMKFKRS (109 aa)).

It belongs to the jacalin lectin family.

It is found in the membrane. This Arabidopsis thaliana (Mouse-ear cress) protein is Probable jacalin-related lectin 26 (JAL26).